A 51-amino-acid chain; its full sequence is Large ribosomal subunit protein bL33 (51 aa).

This sequence belongs to the bacterial ribosomal protein bL33 family.

This Acidithiobacillus ferrooxidans (strain ATCC 53993 / BNL-5-31) (Leptospirillum ferrooxidans (ATCC 53993)) protein is Large ribosomal subunit protein bL33.